The following is a 473-amino-acid chain: Anthocyanidin-3-O-glucoside rhamnosyltransferase (473 aa).

Belongs to the UDP-glycosyltransferase family. In terms of tissue distribution, expressed in petals, styles and anthers.

The protein operates within pigment biosynthesis; anthocyanin biosynthesis. In terms of biological role, controls the rhamnosylation of reddish anthocyanidin-3-O-glucosides, which is the first step in a series of modifications that finally yield magenta or blue/purple coloured anthocyanins. Controls the conversion of anthocyanidin-3-O-glucosides to anthocyanidin-3-O-rutinosides. This Petunia hybrida (Petunia) protein is Anthocyanidin-3-O-glucoside rhamnosyltransferase.